A 380-amino-acid polypeptide reads, in one-letter code: Enoyl-[acyl-carrier-protein] reductase, mitochondrial (380 aa).

Residues 1 to 9 (MLPTFKRYM) constitute a mitochondrion transit peptide. Tyrosine 73 serves as the catalytic Proton donor. NADP(+)-binding positions include asparagine 157, 185-188 (TSSV), 208-210 (RDR), 283-286 (YGGM), and 308-310 (YWV). Serine 339 bears the Phosphoserine mark. Lysine 373 is a binding site for NADP(+).

It belongs to the zinc-containing alcohol dehydrogenase family. Quinone oxidoreductase subfamily. As to quaternary structure, homodimer or in a complex with other proteins. Interacts with ARS1.

The protein localises to the mitochondrion matrix. The catalysed reaction is a 2,3-saturated acyl-[ACP] + NADP(+) = a (2E)-enoyl-[ACP] + NADPH + H(+). It catalyses the reaction (2E,4E)-hexadienoyl-CoA + NADPH + H(+) = (4E)-hexenoyl-CoA + NADP(+). It carries out the reaction (2E)-hexenoyl-CoA + NADPH + H(+) = hexanoyl-CoA + NADP(+). Functionally, catalyzes the NADPH-dependent reduction of trans-2-enoyl thioesters in mitochondrial fatty acid synthesis (fatty acid synthesis type II). Fatty acid chain elongation in mitochondria uses acyl carrier protein (ACP) as an acyl group carrier, but the enzyme accepts both ACP and CoA thioesters as substrates in vitro. Required for respiration and the maintenance of the mitochondrial compartment. The sequence is that of Enoyl-[acyl-carrier-protein] reductase, mitochondrial (ETR1) from Saccharomyces cerevisiae (strain ATCC 204508 / S288c) (Baker's yeast).